Reading from the N-terminus, the 132-residue chain is MSTRTASAGDIKEGSYIMIDNMPCRVVEVEKSKTGKHGSAKARIVGIGVIDGVKRTIVVPTDAAVEVPVIEKFTAQVISISGDSVQLMDLRNYQTFEIPSSYIEDEAKGKLEPGVQVEVWDVAGYKKIMRTR.

At K36 the chain carries Hypusine.

The protein belongs to the eIF-5A family.

It localises to the cytoplasm. In terms of biological role, functions by promoting the formation of the first peptide bond. The sequence is that of Translation initiation factor 5A (eIF5A) from Caldivirga maquilingensis (strain ATCC 700844 / DSM 13496 / JCM 10307 / IC-167).